The following is a 188-amino-acid chain: Protein GrpE 2 (188 aa).

A compositionally biased stretch (basic and acidic residues) spans 1–29; that stretch reads MDNQEKKTNYQNTDKENDLEKNKEKKNDE. The disordered stretch occupies residues 1 to 33; sequence MDNQEKKTNYQNTDKENDLEKNKEKKNDESIFQ.

The protein belongs to the GrpE family. Homodimer.

The protein localises to the cytoplasm. Participates actively in the response to hyperosmotic and heat shock by preventing the aggregation of stress-denatured proteins, in association with DnaK and GrpE. It is the nucleotide exchange factor for DnaK and may function as a thermosensor. Unfolded proteins bind initially to DnaJ; upon interaction with the DnaJ-bound protein, DnaK hydrolyzes its bound ATP, resulting in the formation of a stable complex. GrpE releases ADP from DnaK; ATP binding to DnaK triggers the release of the substrate protein, thus completing the reaction cycle. Several rounds of ATP-dependent interactions between DnaJ, DnaK and GrpE are required for fully efficient folding. The chain is Protein GrpE 2 from Buchnera aphidicola subsp. Schizaphis graminum (strain Sg).